Reading from the N-terminus, the 366-residue chain is UDP-N-acetylglucosamine--N-acetylmuramyl-(pentapeptide) pyrophosphoryl-undecaprenol N-acetylglucosamine transferase (366 aa).

UDP-N-acetyl-alpha-D-glucosamine contacts are provided by residues 14–16 (TGG), Asn-125, Arg-168, Ser-196, and Gln-297.

This sequence belongs to the glycosyltransferase 28 family. MurG subfamily.

The protein localises to the cell inner membrane. It carries out the reaction di-trans,octa-cis-undecaprenyl diphospho-N-acetyl-alpha-D-muramoyl-L-alanyl-D-glutamyl-meso-2,6-diaminopimeloyl-D-alanyl-D-alanine + UDP-N-acetyl-alpha-D-glucosamine = di-trans,octa-cis-undecaprenyl diphospho-[N-acetyl-alpha-D-glucosaminyl-(1-&gt;4)]-N-acetyl-alpha-D-muramoyl-L-alanyl-D-glutamyl-meso-2,6-diaminopimeloyl-D-alanyl-D-alanine + UDP + H(+). The protein operates within cell wall biogenesis; peptidoglycan biosynthesis. Cell wall formation. Catalyzes the transfer of a GlcNAc subunit on undecaprenyl-pyrophosphoryl-MurNAc-pentapeptide (lipid intermediate I) to form undecaprenyl-pyrophosphoryl-MurNAc-(pentapeptide)GlcNAc (lipid intermediate II). This Rhodopseudomonas palustris (strain HaA2) protein is UDP-N-acetylglucosamine--N-acetylmuramyl-(pentapeptide) pyrophosphoryl-undecaprenol N-acetylglucosamine transferase.